We begin with the raw amino-acid sequence, 226 residues long: SURF1-like protein (226 aa).

A run of 2 helical transmembrane segments spans residues 3–23 (TNLV…WQLS) and 199–219 (LEYA…YVIY).

The protein belongs to the SURF1 family.

Its subcellular location is the cell membrane. This is SURF1-like protein from Rickettsia felis (strain ATCC VR-1525 / URRWXCal2) (Rickettsia azadi).